We begin with the raw amino-acid sequence, 346 residues long: Methionine import ATP-binding protein MetN 1 (346 aa).

The ABC transporter domain maps to 2 to 241; sequence IELKNVSKVF…PQHVTTKKFV (240 aa). Residue 38–45 coordinates ATP; the sequence is GYSGAGKS.

The protein belongs to the ABC transporter superfamily. Methionine importer (TC 3.A.1.24) family. In terms of assembly, the complex is composed of two ATP-binding proteins (MetN), two transmembrane proteins (MetI) and a solute-binding protein (MetQ).

Its subcellular location is the cell membrane. It carries out the reaction L-methionine(out) + ATP + H2O = L-methionine(in) + ADP + phosphate + H(+). The enzyme catalyses D-methionine(out) + ATP + H2O = D-methionine(in) + ADP + phosphate + H(+). Its function is as follows. Part of the ABC transporter complex MetNIQ involved in methionine import. Responsible for energy coupling to the transport system. In Bacillus anthracis, this protein is Methionine import ATP-binding protein MetN 1.